The chain runs to 388 residues: Chorismate synthase (388 aa).

NADP(+) is bound by residues arginine 39 and arginine 45. FMN is bound by residues 130–132 (RSS), 251–252 (NA), glycine 296, 311–315 (KPIPT), and arginine 337.

Belongs to the chorismate synthase family. As to quaternary structure, homotetramer. The cofactor is FMNH2.

The catalysed reaction is 5-O-(1-carboxyvinyl)-3-phosphoshikimate = chorismate + phosphate. It functions in the pathway metabolic intermediate biosynthesis; chorismate biosynthesis; chorismate from D-erythrose 4-phosphate and phosphoenolpyruvate: step 7/7. In terms of biological role, catalyzes the anti-1,4-elimination of the C-3 phosphate and the C-6 proR hydrogen from 5-enolpyruvylshikimate-3-phosphate (EPSP) to yield chorismate, which is the branch point compound that serves as the starting substrate for the three terminal pathways of aromatic amino acid biosynthesis. This reaction introduces a second double bond into the aromatic ring system. This Geobacillus kaustophilus (strain HTA426) protein is Chorismate synthase.